We begin with the raw amino-acid sequence, 250 residues long: 2,3-bisphosphoglycerate-dependent phosphoglycerate mutase (250 aa).

Substrate is bound by residues 8 to 15 (RHGESQWN), 21 to 22 (TG), Arg-60, 87 to 90 (ERHY), Lys-98, 114 to 115 (RR), and 183 to 184 (GN). The active-site Tele-phosphohistidine intermediate is His-9. Glu-87 (proton donor/acceptor) is an active-site residue.

Belongs to the phosphoglycerate mutase family. BPG-dependent PGAM subfamily. In terms of assembly, homodimer.

The catalysed reaction is (2R)-2-phosphoglycerate = (2R)-3-phosphoglycerate. It functions in the pathway carbohydrate degradation; glycolysis; pyruvate from D-glyceraldehyde 3-phosphate: step 3/5. Its function is as follows. Catalyzes the interconversion of 2-phosphoglycerate and 3-phosphoglycerate. In Bordetella avium (strain 197N), this protein is 2,3-bisphosphoglycerate-dependent phosphoglycerate mutase.